We begin with the raw amino-acid sequence, 183 residues long: Large ribosomal subunit protein uL5 (183 aa).

The protein belongs to the universal ribosomal protein uL5 family. As to quaternary structure, part of the 50S ribosomal subunit; part of the 5S rRNA/L5/L18/L25 subcomplex. Contacts the 5S rRNA and the P site tRNA. Forms a bridge to the 30S subunit in the 70S ribosome.

Its function is as follows. This is one of the proteins that bind and probably mediate the attachment of the 5S RNA into the large ribosomal subunit, where it forms part of the central protuberance. In the 70S ribosome it contacts protein S13 of the 30S subunit (bridge B1b), connecting the 2 subunits; this bridge is implicated in subunit movement. Contacts the P site tRNA; the 5S rRNA and some of its associated proteins might help stabilize positioning of ribosome-bound tRNAs. This chain is Large ribosomal subunit protein uL5, found in Corynebacterium aurimucosum (strain ATCC 700975 / DSM 44827 / CIP 107346 / CN-1) (Corynebacterium nigricans).